The following is a 459-amino-acid chain: V-type ATP synthase beta chain (459 aa).

Belongs to the ATPase alpha/beta chains family.

Produces ATP from ADP in the presence of a proton gradient across the membrane. The V-type beta chain is a regulatory subunit. This is V-type ATP synthase beta chain from Thermoanaerobacter pseudethanolicus (strain ATCC 33223 / 39E) (Clostridium thermohydrosulfuricum).